The chain runs to 498 residues: Angiopoietin-1 (498 aa).

A signal peptide spans 1–19 (MTVFLSFAFFAAILTHIGC). Residues 81–119 (QKLQHLEHVMENYTQWLQKLENYIVENMKSEMAQIQQNA) are a coiled coil. Residues Asn-92, Asn-122, Asn-154, Asn-243, and Asn-295 are each glycosylated (N-linked (GlcNAc...) asparagine). Positions 153-261 (LNQTSRLEIQ…LELMDTVHNL (109 aa)) form a coiled coil. Positions 277-497 (REEEKPFRDC…STTMMIRPLD (221 aa)) constitute a Fibrinogen C-terminal domain. Disulfide bonds link Cys-286–Cys-315 and Cys-439–Cys-452.

Homooligomer. Interacts with TEK/TIE2. Interacts with SVEP1/polydom. Interacts with THBD; this interaction significantly inhibits the generation of activated PC and TAFIa/CPB2 by the thrombin/thrombomodulin complex.

The protein localises to the secreted. In terms of biological role, binds and activates TEK/TIE2 receptor by inducing its dimerization and tyrosine phosphorylation. Plays an important role in the regulation of angiogenesis, endothelial cell survival, proliferation, migration, adhesion and cell spreading, reorganization of the actin cytoskeleton, but also maintenance of vascular quiescence. Required for normal angiogenesis and heart development during embryogenesis. After birth, activates or inhibits angiogenesis, depending on the context. Inhibits angiogenesis and promotes vascular stability in quiescent vessels, where endothelial cells have tight contacts. In quiescent vessels, ANGPT1 oligomers recruit TEK to cell-cell contacts, forming complexes with TEK molecules from adjoining cells, and this leads to preferential activation of phosphatidylinositol 3-kinase and the AKT1 signaling cascades. In migrating endothelial cells that lack cell-cell adhesions, ANGT1 recruits TEK to contacts with the extracellular matrix, leading to the formation of focal adhesion complexes, activation of PTK2/FAK and of the downstream kinases MAPK1/ERK2 and MAPK3/ERK1, and ultimately to the stimulation of sprouting angiogenesis. Mediates blood vessel maturation/stability. Implicated in endothelial developmental processes later and distinct from that of VEGF. Appears to play a crucial role in mediating reciprocal interactions between the endothelium and surrounding matrix and mesenchyme. This is Angiopoietin-1 (Angpt1) from Mus musculus (Mouse).